The primary structure comprises 146 residues: Hemoglobin subunit beta (146 aa).

N-acetylvaline is present on Val1. In terms of domain architecture, Globin spans 2 to 146; sequence HLTGEEKSAV…VANALAHKYH (145 aa). Thr12 is subject to Phosphothreonine. Ser44 carries the post-translational modification Phosphoserine. Position 59 is an N6-acetyllysine (Lys59). Position 63 (His63) interacts with heme b. At Lys82 the chain carries N6-acetyllysine. Heme b is bound at residue His92. The residue at position 93 (Cys93) is an S-nitrosocysteine. Lys144 is modified (N6-acetyllysine).

Belongs to the globin family. As to quaternary structure, heterotetramer of two alpha chains and two beta chains. Red blood cells.

Its function is as follows. Involved in oxygen transport from the lung to the various peripheral tissues. This is Hemoglobin subunit beta (HBB) from Nycticebus coucang (Slow loris).